Here is a 248-residue protein sequence, read N- to C-terminus: MASHLGGLRDAPVVRVESLVRSFGPRTILDGLSLDIEKGEFVALLGRSGSGKSTLLRALADLDDKVSGSGRLETPDKKSVVFQDARLLPWKRVLENVVLGLDLPDAAERGRAALEEVGLNGRETAWPVELSGGEQQRVALARSLVRDPDLLLADEPFGALDALTRLRMHDLLRQLCARHQPAVLLVTHDVDEAVTLADRVLVLDKGAIAADIAIDIPKPRDHGHRRFGEIRSELLRHLGVETRPVLPV.

An ABC transporter domain is found at 14–230; the sequence is VRVESLVRSF…DHGHRRFGEI (217 aa). Residue 46-53 coordinates ATP; that stretch reads GRSGSGKS.

It belongs to the ABC transporter superfamily. Aliphatic sulfonates importer (TC 3.A.1.17.2) family. As to quaternary structure, the complex is composed of two ATP-binding proteins (SsuB), two transmembrane proteins (SsuC) and a solute-binding protein (SsuA).

It localises to the cell inner membrane. The enzyme catalyses ATP + H2O + aliphatic sulfonate-[sulfonate-binding protein]Side 1 = ADP + phosphate + aliphatic sulfonateSide 2 + [sulfonate-binding protein]Side 1.. In terms of biological role, part of the ABC transporter complex SsuABC involved in aliphatic sulfonates import. Responsible for energy coupling to the transport system. The protein is Aliphatic sulfonates import ATP-binding protein SsuB 2 of Mesorhizobium japonicum (strain LMG 29417 / CECT 9101 / MAFF 303099) (Mesorhizobium loti (strain MAFF 303099)).